The sequence spans 620 residues: MEVFMAKNVKTKSKNKNKKIVDNRTNIDIKSQFKKVETGIKNGVFVFTNNLTIDEFSKKINKHSAEIIKYLFLKGINCNLNTLLDERQMGELCLEFGYDFKKEIQINEDNFLDNIKFEDREDLLDKRPPIVTIMGHVDHGKTTLLDTIRKSKVAATEAGNITQSIGAYQVEWKKHLITFFDTPGHEAFSKMRAVGADLTDIVVLVVAADDGLKPQTEEAIDHALFAKAPIIVFINKMDKKDANIEKIYSQLAEKNVLCEEWGGKTMVIKGSALNNQGIDELLEAIIVTAEIMELKANPKRLANGITIEASMDKGEGAVADLLVQSGTLAVNDYILVGEYYGKVKKMVDFNRKEIKTALPSTPVRISGLNGIPKSGDKWIVTNDEKLLKELSEKRQLNTKQRKLSNFGTNLNENSQGIKELNVILKTDNNGSLEAIKGLLSSIEVTGAKLNLVRAAIGSINESDIDLARTSKSLVVIFNTKVSSKVSDYAISMGITIKNYNIIYQIKDEIERLLKGILDPVFVEKEIGSVEIRQLWSHSSIGVIAGGRVLTGEIKRNAFARIKRKDKEIISNAKINSLRHGKDSIASAAAGKECGFTLENFNDFVEGDIVEIYEIVGETHE.

The tr-type G domain maps to 126–295 (KRPPIVTIMG…IVTAEIMELK (170 aa)). The tract at residues 135–142 (GHVDHGKT) is G1. 135-142 (GHVDHGKT) is a binding site for GTP. Residues 160-164 (NITQS) are G2. Positions 181–184 (DTPG) are G3. Residues 181 to 185 (DTPGH) and 235 to 238 (NKMD) each bind GTP. The tract at residues 235-238 (NKMD) is G4. The segment at 271-273 (SAL) is G5.

It belongs to the TRAFAC class translation factor GTPase superfamily. Classic translation factor GTPase family. IF-2 subfamily.

The protein resides in the cytoplasm. In terms of biological role, one of the essential components for the initiation of protein synthesis. Protects formylmethionyl-tRNA from spontaneous hydrolysis and promotes its binding to the 30S ribosomal subunits. Also involved in the hydrolysis of GTP during the formation of the 70S ribosomal complex. The chain is Translation initiation factor IF-2 from Malacoplasma penetrans (strain HF-2) (Mycoplasma penetrans).